We begin with the raw amino-acid sequence, 1072 residues long: Error-prone DNA polymerase (1072 aa).

This sequence belongs to the DNA polymerase type-C family. DnaE2 subfamily.

The protein localises to the cytoplasm. The catalysed reaction is DNA(n) + a 2'-deoxyribonucleoside 5'-triphosphate = DNA(n+1) + diphosphate. In terms of biological role, DNA polymerase involved in damage-induced mutagenesis and translesion synthesis (TLS). It is not the major replicative DNA polymerase. The polypeptide is Error-prone DNA polymerase (Burkholderia pseudomallei (strain K96243)).